Here is a 295-residue protein sequence, read N- to C-terminus: METPAWPRVPRPETAVARTLLLGWVFAQVAGASGTTNTVAAYNLTWKSTNFKTILEWEPKPVNQVYTVQISTKSGDWKSKCFYTTDTECDLTDEIVKDVKQTYLARVFSYPAGNVESTGSAGEPLYENSPEFTPYLETNLGQPTIQSFEQVGTKVNVTVEDERTLVRRNNTFLSLRDVFGKDLIYTLYYWKSSSSGKKTAKTNTNEFLIDVDKGENYCFSVQAVIPSRTVNRKSTDSPVECMGQEKGEFREIFYIIGAVVFVVIILVIILAISLHKCRKAGVGQSWKENSPLNVS.

A signal peptide spans 1–32 (METPAWPRVPRPETAVARTLLLGWVFAQVAGA). Over 33-251 (SGTTNTVAAY…MGQEKGEFRE (219 aa)) the chain is Extracellular. Short sequence motifs (WKS motif) lie at residues 46-48 (WKS) and 77-79 (WKS). Residues C81 and C89 are joined by a disulfide bond. 2 N-linked (GlcNAc...) asparagine glycosylation sites follow: N156 and N169. The short motif at 190 to 192 (WKS) is the WKS motif element. An intrachain disulfide couples C218 to C241. The helical transmembrane segment at 252-274 (IFYIIGAVVFVVIILVIILAISL) threads the bilayer. Residues 275–295 (HKCRKAGVGQSWKENSPLNVS) lie on the Cytoplasmic side of the membrane. The S-palmitoyl cysteine moiety is linked to residue C277.

It belongs to the tissue factor family. As to quaternary structure, interacts with HSPE; the interaction, inhibited by heparin, promotes the generation of activated factor X and activates coagulation in the presence of activated factor VII. In terms of tissue distribution, lung, placenta and pancreas.

It is found in the membrane. Its subcellular location is the secreted. Functionally, initiates blood coagulation by forming a complex with circulating factor VII or VIIa. The [TF:VIIa] complex activates factors IX or X by specific limited proteolysis. TF plays a role in normal hemostasis by initiating the cell-surface assembly and propagation of the coagulation protease cascade. The polypeptide is Tissue factor (F3) (Homo sapiens (Human)).